The following is a 228-amino-acid chain: Ephrin-A5 (228 aa).

A signal peptide spans 1 to 20; sequence MLHVEMLTLLFLVLWMCVFS. Residues 29–162 enclose the Ephrin RBD domain; that stretch reads ADRYAVYWNS…KLKVFVRPTN (134 aa). A glycan (N-linked (GlcNAc...) asparagine) is linked at N37. 2 cysteine pairs are disulfide-bonded: C62/C102 and C90/C151. The segment at 186-205 is disordered; that stretch reads EPADDTVHESAEPSRGENAA. Over residues 190-200 the composition is skewed to basic and acidic residues; the sequence is DTVHESAEPSR. N203 carries the GPI-anchor amidated asparagine lipid modification. Positions 204 to 228 are cleaved as a propeptide — removed in mature form; that stretch reads AAQTPRIPSRLLAILLFLLAMLLTL.

It belongs to the ephrin family. Binds to the receptor tyrosine kinases EPHA2, EPHA3, EPHB1 and EPHB2. Interacts with EPHA8; activates EPHA8. Forms a ternary EFNA5-EPHA3-ADAM10 complex mediating EFNA5 extracellular domain shedding by ADAM10 which regulates the EFNA5-EPHA3 complex internalization and function. In terms of tissue distribution, expressed in brain, heart, placenta and lung.

It is found in the cell membrane. Its subcellular location is the membrane. The protein resides in the caveola. Cell surface GPI-bound ligand for Eph receptors, a family of receptor tyrosine kinases which are crucial for migration, repulsion and adhesion during neuronal, vascular and epithelial development. Binds promiscuously Eph receptors residing on adjacent cells, leading to contact-dependent bidirectional signaling into neighboring cells. The signaling pathway downstream of the receptor is referred to as forward signaling while the signaling pathway downstream of the ephrin ligand is referred to as reverse signaling. Induces compartmentalized signaling within a caveolae-like membrane microdomain when bound to the extracellular domain of its cognate receptor. This signaling event requires the activity of the Fyn tyrosine kinase. Activates the EPHA3 receptor to regulate cell-cell adhesion and cytoskeletal organization. With the receptor EPHA2 may regulate lens fiber cells shape and interactions and be important for lens transparency maintenance. May function actively to stimulate axon fasciculation. The interaction of EFNA5 with EPHA5 also mediates communication between pancreatic islet cells to regulate glucose-stimulated insulin secretion. Cognate/functional ligand for EPHA7, their interaction regulates brain development modulating cell-cell adhesion and repulsion. The sequence is that of Ephrin-A5 (Efna5) from Rattus norvegicus (Rat).